A 253-amino-acid chain; its full sequence is uncharacterized protein (253 aa).

This is an uncharacterized protein from Haemophilus influenzae (strain ATCC 51907 / DSM 11121 / KW20 / Rd).